Here is a 152-residue protein sequence, read N- to C-terminus: MKLNELYNNIGAKKNKKRVARGIGSGKGKTAGRGVKGQKSRAGVAIKGFEGGQTPMIKRLPKRGFNCISSKKYNVINIYNIEAAIAEERLNANDVITKEKLIEIGLINKSNKKLVKLLSICSDDFNYPLSFKLDSYSSKAKEIVEKAGGKLL.

Residues 18–37 are disordered; sequence RVARGIGSGKGKTAGRGVKG. Over residues 23-35 the composition is skewed to gly residues; the sequence is IGSGKGKTAGRGV.

Belongs to the universal ribosomal protein uL15 family. As to quaternary structure, part of the 50S ribosomal subunit.

In terms of biological role, binds to the 23S rRNA. This Rickettsia bellii (strain OSU 85-389) protein is Large ribosomal subunit protein uL15.